A 149-amino-acid chain; its full sequence is Probable glycine-rich RNA-binding protein 1 (149 aa).

The 76-residue stretch at 8–83 (YRCFVGGLAW…LDGRNITAQA (76 aa)) folds into the RRM domain. The tract at residues 80–149 (TAQARGSGTR…GRSEGGSWRN (70 aa)) is disordered. Gly residues-rich tracts occupy residues 87-101 (GTRG…SGGY), 110-123 (YNRG…GGYG), and 131-143 (YGDG…GRSE).

This sequence belongs to the GR-RBP family.

Its function is as follows. Possibly has a role in RNA transcription or processing during stress. This chain is Probable glycine-rich RNA-binding protein 1 (RBG1), found in Arabidopsis thaliana (Mouse-ear cress).